A 197-amino-acid chain; its full sequence is dTTP/UTP pyrophosphatase (197 aa).

The active-site Proton acceptor is the Asp-70.

It belongs to the Maf family. YhdE subfamily. A divalent metal cation serves as cofactor.

The protein resides in the cytoplasm. It carries out the reaction dTTP + H2O = dTMP + diphosphate + H(+). The enzyme catalyses UTP + H2O = UMP + diphosphate + H(+). In terms of biological role, nucleoside triphosphate pyrophosphatase that hydrolyzes dTTP and UTP. May have a dual role in cell division arrest and in preventing the incorporation of modified nucleotides into cellular nucleic acids. The sequence is that of dTTP/UTP pyrophosphatase (yceF2) from Shigella boydii serotype 4 (strain Sb227).